The sequence spans 143 residues: Transcriptional regulator MraZ (143 aa).

SpoVT-AbrB domains follow at residues 5 to 47 (EYFH…PVSA) and 76 to 119 (ASNQ…DKEK).

This sequence belongs to the MraZ family. As to quaternary structure, forms oligomers.

The protein resides in the cytoplasm. Its subcellular location is the nucleoid. This Finegoldia magna (strain ATCC 29328 / DSM 20472 / WAL 2508) (Peptostreptococcus magnus) protein is Transcriptional regulator MraZ.